We begin with the raw amino-acid sequence, 36 residues long: Alpha-conotoxin-like Pu1.3 (36 aa).

The propeptide occupies 1-21 (SDGRNAGADRKGFGLISQMFK). Intrachain disulfides connect Cys-24–Cys-30 and Cys-25–Cys-36.

Belongs to the conotoxin A superfamily. As to expression, expressed by the venom duct.

The protein resides in the secreted. Alpha-conotoxins act on postsynaptic membranes, they bind to the nicotinic acetylcholine receptors (nAChR) and thus inhibit them. This is Alpha-conotoxin-like Pu1.3 from Conus pulicarius (Flea-bitten cone).